The sequence spans 325 residues: Peroxidase 68 (325 aa).

A signal peptide spans 1–28 (MECYEQSRQRAAFVVLLFIVMLGSQAQA). Glutamine 29 carries the post-translational modification Pyrrolidone carboxylic acid. 4 disulfide bridges follow: cysteine 39-cysteine 119, cysteine 72-cysteine 77, cysteine 125-cysteine 321, and cysteine 205-cysteine 230. The Proton acceptor role is filled by histidine 70. 5 residues coordinate Ca(2+): aspartate 71, valine 74, glycine 76, aspartate 78, and serine 80. Asparagine 99 carries an N-linked (GlcNAc...) asparagine glycan. Residue proline 168 coordinates substrate. Residue histidine 198 coordinates heme b. Threonine 199 lines the Ca(2+) pocket. N-linked (GlcNAc...) asparagine glycosylation occurs at asparagine 214. Aspartate 245, threonine 248, and aspartate 253 together coordinate Ca(2+).

This sequence belongs to the peroxidase family. Classical plant (class III) peroxidase subfamily. Requires heme b as cofactor. The cofactor is Ca(2+).

It is found in the secreted. It catalyses the reaction 2 a phenolic donor + H2O2 = 2 a phenolic radical donor + 2 H2O. Removal of H(2)O(2), oxidation of toxic reductants, biosynthesis and degradation of lignin, suberization, auxin catabolism, response to environmental stresses such as wounding, pathogen attack and oxidative stress. These functions might be dependent on each isozyme/isoform in each plant tissue. In Arabidopsis thaliana (Mouse-ear cress), this protein is Peroxidase 68 (PER68).